A 60-amino-acid polypeptide reads, in one-letter code: Large ribosomal subunit protein uL30 (60 aa).

This sequence belongs to the universal ribosomal protein uL30 family. Part of the 50S ribosomal subunit.

This is Large ribosomal subunit protein uL30 from Levilactobacillus brevis (strain ATCC 367 / BCRC 12310 / CIP 105137 / JCM 1170 / LMG 11437 / NCIMB 947 / NCTC 947) (Lactobacillus brevis).